We begin with the raw amino-acid sequence, 503 residues long: MLKTGGLSPSLCLLSLLLALHSAERSYPPPQRRFEYKLSFKGPRLAVPGAGIPFWSHHGDAIPGLEEVRLVPSMKNRSGAVWSEISVSFPSWEVEMQMRVTGPGRRGALGVAMWYTKDRDQVGSVVEGLASWDGIGIYFDSSSNDVQNGPAIRVLASDGHDLQEQFGDGTVRELGSCLRDFRNRPHPFRARITYWRQRLRVSLSGGLTPNDPEEVCVDVEPLLLAPGGFFGVSAATSTLADDHDVLSFLTFSLRDPGSEEALQPFTEKEQFHLARKLEELKARLALGTREDTILPLNSKAQEEGERFFNLEDTLSRQSQILQALQALSRQMDQAEKQWKQQLGSVVQIRPEGGWNTAKVSTLLYGQRTLIQALQEMREAAAQMASGAQVFYLPVGTKHHFFELDQTLGLLQKDLRDLVKMTAKPPRPSGWLPGFSTCLRTSIFLFFLLIQTVGFFCYMNFRQELDKRLQEYLFTESISLQPALPIPRTIGVLRRQPVSPSMQA.

The signal sequence occupies residues 1–25 (MLKTGGLSPSLCLLSLLLALHSAER). The Lumenal segment spans residues 26-439 (SYPPPQRRFE…WLPGFSTCLR (414 aa)). The 222-residue stretch at 32 to 253 (RRFEYKLSFK…DVLSFLTFSL (222 aa)) folds into the L-type lectin-like domain. A disulfide bridge connects residues Cys177 and Cys216. A helical transmembrane segment spans residues 440 to 460 (TSIFLFFLLIQTVGFFCYMNF). Residues 461–503 (RQELDKRLQEYLFTESISLQPALPIPRTIGVLRRQPVSPSMQA) are Cytoplasmic-facing.

As to expression, predominantly expressed in the sublingual salivary gland, in the mucous cells of the acini, but not in the serous cells, nor in the duct system (at protein level). Not detected in the submandilar, nor the parotid glands. Expressed in the mucous glands, but not detected in the serous glands (at protein level). Besides the salivary glands, expressed in the Brunner's glands in the duodenum, but no other mucous or serous glands (at protein level).

Its subcellular location is the endoplasmic reticulum-Golgi intermediate compartment membrane. In Rattus norvegicus (Rat), this protein is Protein ERGIC-53-like (Lman1l).